The sequence spans 280 residues: MNKDKKLGPILLEKIMEKARDYDFLLKNRYLVSGECGIVEIAEIDEKTEKIDLVLVLGGDGTILCATRYFAPKAIPILGINLGQLGYLSELDPQEIDFGLQKIRAGEYLVEDRTMLEARVRRANQEVAVFYGLNDGVLTKGAFARIINFAVFVDEQYITEYAADGVIVATPTGSTAYSLSAGGAILDPEVKAFIITPICPHTLAARSLVVADDKEIRIVVKTALESSMLTVDGQQGFGIKPGDEIIIKKAPYQAKFIKLKNRSFYQLLREKMREANRYHD.

Asp-60 functions as the Proton acceptor in the catalytic mechanism. NAD(+) contacts are provided by residues 60-61 (DG), 134-135 (ND), Arg-145, Asp-164, 175-180 (TAYSLS), and Gln-234.

Belongs to the NAD kinase family. It depends on a divalent metal cation as a cofactor.

It localises to the cytoplasm. The catalysed reaction is NAD(+) + ATP = ADP + NADP(+) + H(+). Its function is as follows. Involved in the regulation of the intracellular balance of NAD and NADP, and is a key enzyme in the biosynthesis of NADP. Catalyzes specifically the phosphorylation on 2'-hydroxyl of the adenosine moiety of NAD to yield NADP. The protein is NAD kinase of Carboxydothermus hydrogenoformans (strain ATCC BAA-161 / DSM 6008 / Z-2901).